A 99-amino-acid chain; its full sequence is Large ribosomal subunit protein eL21 (99 aa).

This sequence belongs to the eukaryotic ribosomal protein eL21 family.

The chain is Large ribosomal subunit protein eL21 from Methanocella arvoryzae (strain DSM 22066 / NBRC 105507 / MRE50).